The following is a 247-amino-acid chain: uncharacterized protein (247 aa).

2 helical membrane passes run leucine 11 to valine 31 and phenylalanine 39 to leucine 59.

The protein resides in the cell membrane. This is an uncharacterized protein from Haemophilus influenzae (strain ATCC 51907 / DSM 11121 / KW20 / Rd).